We begin with the raw amino-acid sequence, 80 residues long: Cell division topological specificity factor (80 aa).

It belongs to the MinE family.

Prevents the cell division inhibition by proteins MinC and MinD at internal division sites while permitting inhibition at polar sites. This ensures cell division at the proper site by restricting the formation of a division septum at the midpoint of the long axis of the cell. This chain is Cell division topological specificity factor, found in Wolinella succinogenes (strain ATCC 29543 / DSM 1740 / CCUG 13145 / JCM 31913 / LMG 7466 / NCTC 11488 / FDC 602W) (Vibrio succinogenes).